We begin with the raw amino-acid sequence, 687 residues long: Geranylgeranyl transferase type-2 subunit alpha 2 (687 aa).

PFTA repeat units follow at residues 38-72 (YTKEAIQLSAKLLITNPEFYTAWNYPKLAFESRLD), 83-117 (IIDEELGVVQNALERNVKSYGAWYHRKWVLSKKGH), 132-167 (YQKQAHQKQDDEKQDDPSRNFHAWNYRRFVVELTKT), 168-203 (SEEDELQYTTDMISDISFTIYSAWHYRSVLVSSLVA), and 214-248 (TIRRELDYVHSAIFTLEEKQSGWFYYLWLLDQTVK). LRR repeat units follow at residues 523 to 545 (MNNIICLRLNNLTLSRIAAVEKL), 546 to 567 (LFVQMLDLSHNELHSAEGLEAM), 568 to 591 (QLLCCLNLSHNRIRSFSALDSLRH), 592 to 616 (LKQLRVLDVSHNHICGELPVDTTRY), and 646 to 668 (LMKLKQLDIRGNDLIFAGEEFSS).

This sequence belongs to the protein prenyltransferase subunit alpha family. Heterotrimer composed of the alpha subunit RGTA, the beta subunit RGTB and REP; within this trimer, RGTA and RGTB form the catalytic component, while REP mediates peptide substrate binding.

The enzyme catalyses geranylgeranyl diphosphate + L-cysteinyl-[protein] = S-geranylgeranyl-L-cysteinyl-[protein] + diphosphate. The enzymatic reaction requires the aid of the Rab escort protein REP. In terms of biological role, catalyzes the transfer of a geranylgeranyl moiety from geranylgeranyl diphosphate to both cysteines of Rab proteins with the C-terminal sequence -CCXX, CXXX, -XCCX and -XCXC, such as RABA1A, RABA2A, RABF2A and RABG2. Does not seem to be a functional Rab-GGT alpha subunit in vitro. The polypeptide is Geranylgeranyl transferase type-2 subunit alpha 2 (Arabidopsis thaliana (Mouse-ear cress)).